The following is a 60-amino-acid chain: Regulatory protein DegR (60 aa).

Functionally, stabilizes the phosphorylated form of DegU, leading to enhanced production of levansucrase, alkaline protease, and neutral protease. The sequence is that of Regulatory protein DegR (degR) from Bacillus subtilis subsp. natto.